Consider the following 86-residue polypeptide: MKPGIHPDYRPVVFHDTSVDEYFVVGSTLKTDRTIEWKDGKTYPYFTLDVSSSSHPFYTGKQRVVQAEGRIANFNRRFGQFTSEKE.

It belongs to the bacterial ribosomal protein bL31 family. Type B subfamily. Part of the 50S ribosomal subunit.

The chain is Large ribosomal subunit protein bL31B from Vibrio parahaemolyticus serotype O3:K6 (strain RIMD 2210633).